Here is a 66-residue protein sequence, read N- to C-terminus: Large ribosomal subunit protein bL31 (66 aa).

Zn(2+) contacts are provided by cysteine 16, cysteine 18, cysteine 36, and cysteine 39.

The protein belongs to the bacterial ribosomal protein bL31 family. Type A subfamily. Part of the 50S ribosomal subunit. Zn(2+) serves as cofactor.

In terms of biological role, binds the 23S rRNA. This Campylobacter jejuni subsp. jejuni serotype O:6 (strain 81116 / NCTC 11828) protein is Large ribosomal subunit protein bL31.